The following is an 84-amino-acid chain: Sec-independent protein translocase protein TatA (84 aa).

Residues 1–21 (MGGLQPWHWLIVIAVFVLLFG) traverse the membrane as a helical segment. Residues 46–84 (MQSDSNAAKSDQPEQITSERVVVDPSTQSTSSNSDKRPA) form a disordered region. The span at 48–63 (SDSNAAKSDQPEQITS) shows a compositional bias: polar residues.

Belongs to the TatA/E family. The Tat system comprises two distinct complexes: a TatABC complex, containing multiple copies of TatA, TatB and TatC subunits, and a separate TatA complex, containing only TatA subunits. Substrates initially bind to the TatABC complex, which probably triggers association of the separate TatA complex to form the active translocon.

It is found in the cell membrane. Its function is as follows. Part of the twin-arginine translocation (Tat) system that transports large folded proteins containing a characteristic twin-arginine motif in their signal peptide across membranes. TatA could form the protein-conducting channel of the Tat system. In Mycolicibacterium gilvum (strain PYR-GCK) (Mycobacterium gilvum (strain PYR-GCK)), this protein is Sec-independent protein translocase protein TatA.